The following is a 255-amino-acid chain: Imidazole glycerol phosphate synthase subunit HisF (255 aa).

Active-site residues include Asp11 and Asp130.

The protein belongs to the HisA/HisF family. As to quaternary structure, heterodimer of HisH and HisF.

It is found in the cytoplasm. The enzyme catalyses 5-[(5-phospho-1-deoxy-D-ribulos-1-ylimino)methylamino]-1-(5-phospho-beta-D-ribosyl)imidazole-4-carboxamide + L-glutamine = D-erythro-1-(imidazol-4-yl)glycerol 3-phosphate + 5-amino-1-(5-phospho-beta-D-ribosyl)imidazole-4-carboxamide + L-glutamate + H(+). The protein operates within amino-acid biosynthesis; L-histidine biosynthesis; L-histidine from 5-phospho-alpha-D-ribose 1-diphosphate: step 5/9. Functionally, IGPS catalyzes the conversion of PRFAR and glutamine to IGP, AICAR and glutamate. The HisF subunit catalyzes the cyclization activity that produces IGP and AICAR from PRFAR using the ammonia provided by the HisH subunit. In Campylobacter jejuni subsp. jejuni serotype O:6 (strain 81116 / NCTC 11828), this protein is Imidazole glycerol phosphate synthase subunit HisF.